We begin with the raw amino-acid sequence, 251 residues long: Methylthioribulose-1-phosphate dehydratase (251 aa).

The interval 1-26 (MTSVCDATNEDKENGSESTESQDKEH) is disordered. The segment covering 9–26 (NEDKENGSESTESQDKEH) has biased composition (basic and acidic residues). Cys-100 lines the substrate pocket. Zn(2+) contacts are provided by His-118 and His-120. Glu-142 (proton donor/acceptor) is an active-site residue. Zn(2+) is bound at residue His-198. Residues 232 to 251 (MDPSAPPIEENHYYDVQQSQ) are disordered.

It belongs to the aldolase class II family. MtnB subfamily. Requires Zn(2+) as cofactor.

It localises to the cytoplasm. The catalysed reaction is 5-(methylsulfanyl)-D-ribulose 1-phosphate = 5-methylsulfanyl-2,3-dioxopentyl phosphate + H2O. Its pathway is amino-acid biosynthesis; L-methionine biosynthesis via salvage pathway; L-methionine from S-methyl-5-thio-alpha-D-ribose 1-phosphate: step 2/6. In terms of biological role, catalyzes the dehydration of methylthioribulose-1-phosphate (MTRu-1-P) into 2,3-diketo-5-methylthiopentyl-1-phosphate (DK-MTP-1-P). Functions in the methionine salvage pathway. May play a role in apoptosis. This chain is Methylthioribulose-1-phosphate dehydratase, found in Salmo salar (Atlantic salmon).